We begin with the raw amino-acid sequence, 221 residues long: Jacalin-related lectin 47 (221 aa).

Jacalin-type lectin domains lie at 1 to 64 (MDSN…YYYP) and 71 to 217 (SEKL…HVLP).

It belongs to the jacalin lectin family.

In Arabidopsis thaliana (Mouse-ear cress), this protein is Jacalin-related lectin 47 (JAL47).